Reading from the N-terminus, the 982-residue chain is NACHT, LRR and PYD domains-containing protein 4C (982 aa).

Residues 1 to 93 (MASFFSDFGL…MERAGREIAG (93 aa)) enclose the Pyrin domain. The 324-residue stretch at 148–471 (HMVFLQGAAG…FYLLKSHMDH (324 aa)) folds into the NACHT domain. An ATP-binding site is contributed by 154–161 (GAAGIGKS). LRR repeat units follow at residues 594–617 (CSTLKKLSLSTQNVLSEGQEHSYT), 689–716 (NQCLQHLDLNLTFLSHGDVKLLCDVLSQ), 746–773 (SKMLKHLNLSSNNLDKGISSLSKALCHP), 802–825 (NKTLNHLDISSNDLKDEGLKVLCG), 827–844 (LSLPDSVLKSLSVRYCLI), 859–882 (NQNLRNLQVSNNKIEDAGVKLLCD), and 916–940 (CKTLWGINLQENALDHSGLIVLFEA).

Belongs to the NLRP family.

Its function is as follows. May be involved in inflammation and recognition of cytosolic pathogen-associated molecular patterns (PAMPs) not intercepted by membrane-bound receptors. This chain is NACHT, LRR and PYD domains-containing protein 4C (Nlrp4c), found in Mus musculus (Mouse).